The chain runs to 256 residues: Thiazole synthase (256 aa).

Lysine 95 acts as the Schiff-base intermediate with DXP in catalysis. 1-deoxy-D-xylulose 5-phosphate is bound by residues glycine 156, 182 to 183 (AG), and 204 to 205 (NT).

Belongs to the ThiG family. Homotetramer. Forms heterodimers with either ThiH or ThiS.

The protein resides in the cytoplasm. The enzyme catalyses [ThiS sulfur-carrier protein]-C-terminal-Gly-aminoethanethioate + 2-iminoacetate + 1-deoxy-D-xylulose 5-phosphate = [ThiS sulfur-carrier protein]-C-terminal Gly-Gly + 2-[(2R,5Z)-2-carboxy-4-methylthiazol-5(2H)-ylidene]ethyl phosphate + 2 H2O + H(+). It participates in cofactor biosynthesis; thiamine diphosphate biosynthesis. In terms of biological role, catalyzes the rearrangement of 1-deoxy-D-xylulose 5-phosphate (DXP) to produce the thiazole phosphate moiety of thiamine. Sulfur is provided by the thiocarboxylate moiety of the carrier protein ThiS. In vitro, sulfur can be provided by H(2)S. The polypeptide is Thiazole synthase (Salmonella schwarzengrund (strain CVM19633)).